The primary structure comprises 228 residues: Max-interacting protein 1 (228 aa).

Disordered regions lie at residues 29–76 and 161–228; these read GYAS…NELE and IGST…SFTS. Residues 43–56 are compositionally biased toward basic residues; it reads QHSKPPRRLSRAQK. Residues 57 to 70 are compositionally biased toward polar residues; the sequence is HSSGSSNTSTANRS. Positions 67–119 constitute a bHLH domain; that stretch reads ANRSTHNELEKNRRAHLRLCLERLKVLIPLGPDCTRHTTLGLLNKAKAHIKKL. The segment covering 173-183 has biased composition (acidic residues); sequence EREEIEVDVES. The segment covering 216–228 has biased composition (polar residues); it reads GYSSASVKLSFTS.

Interacts with SMC3. Efficient DNA binding requires dimerization with another bHLH protein. Binds DNA as a heterodimer with MAX. Interacts with RNF17. As to expression, high levels found in the brain, heart and lung while lower levels are seen in the liver, kidney and skeletal muscle.

The protein localises to the nucleus. Functionally, transcriptional repressor. MXI1 binds with MAX to form a sequence-specific DNA-binding protein complex which recognizes the core sequence 5'-CAC[GA]TG-3'. MXI1 thus antagonizes MYC transcriptional activity by competing for MAX. The polypeptide is Max-interacting protein 1 (MXI1) (Homo sapiens (Human)).